The following is a 126-amino-acid chain: Large ribosomal subunit protein bL17 (126 aa).

It belongs to the bacterial ribosomal protein bL17 family. Part of the 50S ribosomal subunit. Contacts protein L32.

The sequence is that of Large ribosomal subunit protein bL17 from Xylella fastidiosa (strain Temecula1 / ATCC 700964).